Consider the following 214-residue polypeptide: Pyridoxine/pyridoxamine 5'-phosphate oxidase (214 aa).

Substrate is bound by residues 9 to 12 (RKNY) and lysine 67. FMN contacts are provided by residues 62 to 67 (RIVLLK), 77 to 78 (YT), lysine 83, lysine 84, and glutamine 106. Residues tyrosine 124, arginine 128, and serine 132 each contribute to the substrate site. Residues 141–142 (QS) and tryptophan 186 contribute to the FMN site. 192 to 194 (RLH) provides a ligand contact to substrate. Arginine 196 lines the FMN pocket.

It belongs to the pyridoxamine 5'-phosphate oxidase family. In terms of assembly, homodimer. Requires FMN as cofactor.

The enzyme catalyses pyridoxamine 5'-phosphate + O2 + H2O = pyridoxal 5'-phosphate + H2O2 + NH4(+). It carries out the reaction pyridoxine 5'-phosphate + O2 = pyridoxal 5'-phosphate + H2O2. It participates in cofactor metabolism; pyridoxal 5'-phosphate salvage; pyridoxal 5'-phosphate from pyridoxamine 5'-phosphate: step 1/1. Its pathway is cofactor metabolism; pyridoxal 5'-phosphate salvage; pyridoxal 5'-phosphate from pyridoxine 5'-phosphate: step 1/1. Its function is as follows. Catalyzes the oxidation of either pyridoxine 5'-phosphate (PNP) or pyridoxamine 5'-phosphate (PMP) into pyridoxal 5'-phosphate (PLP). This Leptospira borgpetersenii serovar Hardjo-bovis (strain JB197) protein is Pyridoxine/pyridoxamine 5'-phosphate oxidase.